Consider the following 557-residue polypeptide: Formate--tetrahydrofolate ligase (557 aa).

Residue 65–72 (TPAGEGKT) coordinates ATP.

Belongs to the formate--tetrahydrofolate ligase family.

It carries out the reaction (6S)-5,6,7,8-tetrahydrofolate + formate + ATP = (6R)-10-formyltetrahydrofolate + ADP + phosphate. The protein operates within one-carbon metabolism; tetrahydrofolate interconversion. The chain is Formate--tetrahydrofolate ligase from Methylorubrum extorquens (strain CM4 / NCIMB 13688) (Methylobacterium extorquens).